The following is a 302-amino-acid chain: Sulfate adenylyltransferase subunit 2 (302 aa).

Residues 280–302 (RQGRAIDHDQSGSMELKKRQGYF) are disordered.

It belongs to the PAPS reductase family. CysD subfamily. Heterodimer composed of CysD, the smaller subunit, and CysN.

It carries out the reaction sulfate + ATP + H(+) = adenosine 5'-phosphosulfate + diphosphate. It functions in the pathway sulfur metabolism; hydrogen sulfide biosynthesis; sulfite from sulfate: step 1/3. With CysN forms the ATP sulfurylase (ATPS) that catalyzes the adenylation of sulfate producing adenosine 5'-phosphosulfate (APS) and diphosphate, the first enzymatic step in sulfur assimilation pathway. APS synthesis involves the formation of a high-energy phosphoric-sulfuric acid anhydride bond driven by GTP hydrolysis by CysN coupled to ATP hydrolysis by CysD. This chain is Sulfate adenylyltransferase subunit 2, found in Vibrio atlanticus (strain LGP32) (Vibrio splendidus (strain Mel32)).